The sequence spans 88 residues: Mitochondrial import inner membrane translocase subunit Tim10 (88 aa).

The Twin CX3C motif signature appears at 25–49 (CSAKCISKYNEGDLNVGESVCAERC). Cystine bridges form between Cys25–Cys49 and Cys29–Cys45. Positions 63-88 (KMSGTQPGQEVPQEAPAAAPEKKGWF) are disordered. Over residues 68–81 (QPGQEVPQEAPAAA) the composition is skewed to low complexity.

It belongs to the small Tim family. Heterohexamer; composed of 3 copies of timm9 and 3 copies of timm10, named soluble 70 kDa complex. Associates directly with the TIM22 complex, whose core is composed of timm22. Interacts with the transmembrane regions of multi-pass transmembrane proteins in transit.

It is found in the mitochondrion inner membrane. Functionally, component of the TIM22 complex, a complex that mediates the import and insertion of multi-pass transmembrane proteins into the mitochondrial inner membrane. The TIM22 complex forms a twin-pore translocase that uses the membrane potential as external driving force. This is Mitochondrial import inner membrane translocase subunit Tim10 (timm10) from Dictyostelium discoideum (Social amoeba).